The sequence spans 273 residues: Sanguinarine reductase (273 aa).

The active-site Proton donor is serine 153. Residues 157–161 (CDPDH) and lysine 175 each bind substrate.

Belongs to the NAD(P)-dependent epimerase/dehydratase family. Monomer.

It catalyses the reaction dihydrosanguinarine + NADP(+) = sanguinarine + NADPH. The enzyme catalyses dihydrosanguinarine + NAD(+) = sanguinarine + NADH. The catalysed reaction is dihydrochelirubine + NAD(+) = chelirubine + NADH. It carries out the reaction dihydrochelirubine + NADP(+) = chelirubine + NADPH. Inhibited by iodoacetamide and irreversibly by its product, dihydrosanguinarine. In terms of biological role, catalyzes the reduction of benzophenanthridines, preferentially sanguinarine, to the corresponding dihydroalkaloids. Involved in detoxifying the phytoalexins produced by plant itself. The sanguinarine produced by intact cells upon elicitation, after excretion and binding to cell wall elements, is rapidly reabsorbed and reduced to the less toxic dihydrosanguinarine. Can work with both NAD(P) or NAD as a hydrogen donor, but at low concentrations, the reaction velocity with NAD(P)H is threefold higher than with NADH. However, chelerythrine shows maximum conversion rates with NADH. The substrate preference is sanguinarine &gt; chelerythrine &gt; chelirubine, macarpine or 10-OH-chelerythrine. No activity with berberine or phenanthridine cations. This chain is Sanguinarine reductase, found in Eschscholzia californica (California poppy).